The chain runs to 272 residues: Shikimate dehydrogenase (NADP(+)) (272 aa).

Shikimate is bound by residues 14-16 (SKS) and threonine 61. The active-site Proton acceptor is lysine 65. Residue glutamate 77 coordinates NADP(+). Residues asparagine 86 and aspartate 102 each contribute to the shikimate site. Residues 126–130 (GAGGA), 150–155 (NRTFSK), and methionine 213 contribute to the NADP(+) site. Tyrosine 215 contacts shikimate. Position 237 (glycine 237) interacts with NADP(+).

The protein belongs to the shikimate dehydrogenase family. Homodimer.

The catalysed reaction is shikimate + NADP(+) = 3-dehydroshikimate + NADPH + H(+). Its pathway is metabolic intermediate biosynthesis; chorismate biosynthesis; chorismate from D-erythrose 4-phosphate and phosphoenolpyruvate: step 4/7. In terms of biological role, involved in the biosynthesis of the chorismate, which leads to the biosynthesis of aromatic amino acids. Catalyzes the reversible NADPH linked reduction of 3-dehydroshikimate (DHSA) to yield shikimate (SA). This Psychromonas ingrahamii (strain DSM 17664 / CCUG 51855 / 37) protein is Shikimate dehydrogenase (NADP(+)).